Here is a 712-residue protein sequence, read N- to C-terminus: Polyribonucleotide nucleotidyltransferase (712 aa).

Residues D493 and D499 each contribute to the Mg(2+) site. The KH domain maps to P560–I622. The 69-residue stretch at G632–K700 folds into the S1 motif domain.

It belongs to the polyribonucleotide nucleotidyltransferase family. Requires Mg(2+) as cofactor.

Its subcellular location is the cytoplasm. It carries out the reaction RNA(n+1) + phosphate = RNA(n) + a ribonucleoside 5'-diphosphate. Its function is as follows. Involved in mRNA degradation. Catalyzes the phosphorolysis of single-stranded polyribonucleotides processively in the 3'- to 5'-direction. In Salinibacter ruber (strain DSM 13855 / M31), this protein is Polyribonucleotide nucleotidyltransferase.